The chain runs to 353 residues: N6-methyladenosine RNA demethylase ALKB1 (353 aa).

Residues 223-352 enclose the Fe2OG dioxygenase domain; that stretch reads IAQAAIVNFY…RINLNVRQMR (130 aa). Positions 241, 243, and 308 each coordinate Fe cation. Residue R343 participates in 2-oxoglutarate binding.

Belongs to the alkB family. Requires Fe(2+) as cofactor.

It localises to the cytoplasm. The protein resides in the P-body. It catalyses the reaction an N(6)-methyladenosine in mRNA + 2-oxoglutarate + O2 = an adenosine in mRNA + formaldehyde + succinate + CO2. RNA demethylase that regulates the stability of mRNAs through an m(6)A-dependent manner. M6A is a modification present at internal sites of mRNAs and some non-coding RNAs and plays a role in mRNA stability and processing. Plays a role in pathogenicity towards plant host. This chain is N6-methyladenosine RNA demethylase ALKB1, found in Pyricularia oryzae (strain 70-15 / ATCC MYA-4617 / FGSC 8958) (Rice blast fungus).